The primary structure comprises 216 residues: Translation initiation factor 6 (216 aa).

The protein belongs to the eIF-6 family.

Binds to the 50S ribosomal subunit and prevents its association with the 30S ribosomal subunit to form the 70S initiation complex. The protein is Translation initiation factor 6 of Thermoplasma acidophilum (strain ATCC 25905 / DSM 1728 / JCM 9062 / NBRC 15155 / AMRC-C165).